The sequence spans 387 residues: Low specificity L-threonine aldolase (387 aa).

Lys213 carries the post-translational modification N6-(pyridoxal phosphate)lysine. Lys228 is covalently cross-linked (Glycyl lysine isopeptide (Lys-Gly) (interchain with G-Cter in ubiquitin)). 2 positions are modified to phosphoserine: Ser367 and Ser369. Thr370 is modified (phosphothreonine).

The protein belongs to the threonine aldolase family. Homotetramer. It depends on pyridoxal 5'-phosphate as a cofactor.

It carries out the reaction L-threonine = acetaldehyde + glycine. It catalyses the reaction L-allo-threonine = acetaldehyde + glycine. It functions in the pathway amino-acid biosynthesis; glycine biosynthesis; glycine from L-allo-threonine: step 1/1. It participates in amino-acid degradation; L-threonine degradation via aldolase pathway; acetaldehyde and glycine from L-threonine: step 1/1. Catalyzes the cleavage of L-allo-threonine and L-threonine to glycine and acetaldehyde. This is Low specificity L-threonine aldolase (GLY1) from Saccharomyces cerevisiae (strain ATCC 204508 / S288c) (Baker's yeast).